The sequence spans 319 residues: MKPENKLPVLDLISAEMKTVVNTLQPDLPPWPATGTIAEQRQYYTLERRFWNAGAPEMATRAYMVPTKYGQVETRLFCPQPDSPATLFYLHGGGFILGNLDTHDRIMRLLASYSQCTVIGIDYTLSPEARFPQAIEEIVAACCYFHQQAEDYQINMSRIGFAGDSAGAMLALASALWLRDKQIDCGKVAGVLLWYGLYGLRDSVTRRLLGGVWDGLTQQDLQMYEEAYLSNDADRESPYYCLFNNDLTREVPPCFIAGAEFDPLLDDSRLLYQTLAAHQQPCEFKLYPGTLHAFLHYSRMMKTADEALRDGAQFFTAQL.

An Involved in the stabilization of the negatively charged intermediate by the formation of the oxyanion hole motif is present at residues H91–G93. Residues S165, D262, and H292 contribute to the active site.

The protein belongs to the 'GDXG' lipolytic enzyme family. Homodimer. Interacts with MalT and MelA.

It localises to the cytoplasm. Functionally, displays esterase activity towards short chain fatty esters (acyl chain length of up to 8 carbons). Able to hydrolyze triacetylglycerol (triacetin) and tributyrylglycerol (tributyrin), but not trioleylglycerol (triolein) or cholesterol oleate. Negatively regulates MalT activity by antagonizing maltotriose binding. Inhibits MelA galactosidase activity. The polypeptide is Acetyl esterase (Escherichia coli O7:K1 (strain IAI39 / ExPEC)).